The sequence spans 293 residues: MDSIYCTFDQKLTLSDIGTLCKLTNAVIPIPSHRHLIGNTNLGLYTVLSTTTDYIQIRDILKTMVLTILQKVEGNQLILIRPKIGHQYEIKNTGPFPLEKGDQLSLLPPFLKPSQQLLVLPNWELILPLLIPTDVATEINVRMLCISLLSIHRKYEEVQIIIDELRTLQYRDVTIKLPDVINDCKSTFSMKTACISFSMIATMAPDIVQTYIERLSLEDQSMLLIKCQELLAKKNFSQEPSSFKATEIKTELQKIKTVFTMINQINSLTQEKTFFIVADVSADNRLATCIFKE.

The protein belongs to the herpesviridae TRX2 protein family. In terms of assembly, interacts with TRX1 and major capisd protein/MCP.

The protein resides in the virion. Its subcellular location is the host nucleus. Functionally, structural component of the T=16 icosahedral capsid. The capsid is composed of pentamers and hexamers of major capsid protein/MCP, which are linked together by heterotrimers called triplexes. These triplexes are formed by a single molecule of triplex protein 1/TRX1 and two copies of triplex protein 2/TRX2. Additionally, TRX1 is required for efficient transport of TRX2 to the nucleus, which is the site of capsid assembly. The polypeptide is Triplex capsid protein 2 (Homo sapiens (Human)).